Here is a 551-residue protein sequence, read N- to C-terminus: Dihydroxy-acid dehydratase (551 aa).

Cys52 contacts [2Fe-2S] cluster. Asp84 serves as a coordination point for Mg(2+). A [2Fe-2S] cluster-binding site is contributed by Cys125. Mg(2+) is bound by residues Asp126 and Lys127. Residue Lys127 is modified to N6-carboxylysine. [2Fe-2S] cluster is bound at residue Cys197. Position 448 (Glu448) interacts with Mg(2+). The active-site Proton acceptor is Ser474.

This sequence belongs to the IlvD/Edd family. Homodimer. It depends on [2Fe-2S] cluster as a cofactor. Mg(2+) serves as cofactor.

The enzyme catalyses (2R)-2,3-dihydroxy-3-methylbutanoate = 3-methyl-2-oxobutanoate + H2O. It catalyses the reaction (2R,3R)-2,3-dihydroxy-3-methylpentanoate = (S)-3-methyl-2-oxopentanoate + H2O. The protein operates within amino-acid biosynthesis; L-isoleucine biosynthesis; L-isoleucine from 2-oxobutanoate: step 3/4. It functions in the pathway amino-acid biosynthesis; L-valine biosynthesis; L-valine from pyruvate: step 3/4. In terms of biological role, functions in the biosynthesis of branched-chain amino acids. Catalyzes the dehydration of (2R,3R)-2,3-dihydroxy-3-methylpentanoate (2,3-dihydroxy-3-methylvalerate) into 2-oxo-3-methylpentanoate (2-oxo-3-methylvalerate) and of (2R)-2,3-dihydroxy-3-methylbutanoate (2,3-dihydroxyisovalerate) into 2-oxo-3-methylbutanoate (2-oxoisovalerate), the penultimate precursor to L-isoleucine and L-valine, respectively. This chain is Dihydroxy-acid dehydratase, found in Francisella tularensis subsp. tularensis (strain FSC 198).